The chain runs to 538 residues: Furcatin hydrolase (538 aa).

A chloroplast-targeting transit peptide spans 1–66 (MATITTLASS…NFNKDNWLAS (66 aa)). Residues 18 to 37 (SFPGGSSRKPKKDNLSIKPP) are disordered. Residues Q88, H192, and 237 to 238 (NE) each bind a beta-D-glucoside. E238 (proton donor) is an active-site residue. A disulfide bridge connects residues C257 and C260. A beta-D-glucoside is bound by residues Y376, E447, W494, 501-502 (EW), and F510. The Nucleophile role is filled by E447.

This sequence belongs to the glycosyl hydrolase 1 family. Expressed in young and mature leaves, but not in fruit and stem.

The protein localises to the plastid. It localises to the chloroplast. It carries out the reaction 7-[beta-D-apiofuranosyl-(1-&gt;6)-beta-D-glucopyranosyloxy]isoflavonoid + H2O = a 7-hydroxyisoflavonoid + beta-D-apiofuranosyl-(1-&gt;6)-D-glucose.. Functionally, disaccharide-specific acuminosidase, hydrolyzes the beta-glycosidic bond between p-allylphenol and acuminose with retention of anomeric configuration. Has highest activity towards furcatin, and lower activity towards beta-primeverosides and beta-vicianoside. Has very low activity towards beta-gentobiosides. The sequence is that of Furcatin hydrolase from Viburnum furcatum (Scarlet leaved viburnum).